A 64-amino-acid chain; its full sequence is Large ribosomal subunit protein bL35 (64 aa).

Residues 1–55 (MPKMKSNKSVAARFKLTGSGQLKRTRPGKRHKLSKRSSQQKRNLSKQPLVDQGQV) form a disordered region. The segment covering 23 to 39 (KRTRPGKRHKLSKRSSQ) has biased composition (basic residues).

The protein belongs to the bacterial ribosomal protein bL35 family.

The protein is Large ribosomal subunit protein bL35 of Chlamydia muridarum (strain MoPn / Nigg).